We begin with the raw amino-acid sequence, 243 residues long: Tyrosine recombinase XerD-like (243 aa).

Positions 1–72 constitute a Core-binding (CB) domain; that stretch reads MKEYIRPFLN…AVNQFLYFLY (72 aa). Residues 85–243 enclose the Tyr recombinase domain; it reads LPKVSVSKEQ…KTMITLEKYR (159 aa). Catalysis depends on residues lysine 149 and arginine 210. The active-site O-(3'-phospho-DNA)-tyrosine intermediate is the tyrosine 242.

Belongs to the 'phage' integrase family. XerD-like subfamily.

Its subcellular location is the cytoplasm. Functionally, putative tyrosine recombinase. Not involved in the cutting and rejoining of the recombining DNA molecules on dif(SL) site. The chain is Tyrosine recombinase XerD-like from Streptococcus sanguinis (strain SK36).